The primary structure comprises 558 residues: Atlastin-1 (558 aa).

Positions 1 to 28 are disordered; sequence MAKNRRDRNSWGGFSEKTYEWSSEEEEP. The interval 1 to 34 is N-terminal hypervariable region (HVR); it reads MAKNRRDRNSWGGFSEKTYEWSSEEEEPVKKAGP. Residues 1 to 449 are Cytoplasmic-facing; it reads MAKNRRDRNS…NIFHAARTPA (449 aa). 3 positions are modified to phosphoserine: serine 10, serine 22, and serine 23. Residues 64–309 enclose the GB1/RHD3-type G domain; the sequence is DKEVVAVSVA…LIPWLLSPES (246 aa). Residues arginine 77, lysine 78, glycine 79, lysine 80, serine 81, phenylalanine 82, glutamine 148, arginine 217, aspartate 218, valine 276, and asparagine 279 each contribute to the GDP site. GTP-binding residues include arginine 77, lysine 78, glycine 79, lysine 80, serine 81, and phenylalanine 82. Residue serine 81 coordinates Mg(2+). 3 residues coordinate GTP: arginine 217, aspartate 218, and valine 276. The 3HB (three-helix bundle) domain stretch occupies residues 347 to 438; it reads MLQATAEANN…YIQYIKHNDS (92 aa). Lysine 395 bears the N6-acetyllysine mark. The stretch at 418-439 forms a coiled coil; that stretch reads LQQLETEIDELYIQYIKHNDSK. The linker stretch occupies residues 439–447; sequence KNIFHAART. Residues 450-470 form a helical membrane-spanning segment; the sequence is TLFVVIFITYVIAGVTGFIGL. Residue aspartate 471 is a topological domain, lumenal. A helical membrane pass occupies residues 472–492; sequence IIASLCNMIMGLTLITLCTWA. Over 493–558 the chain is Cytoplasmic; sequence YIRYSGEYRE…STEQSEKKKM (66 aa). An autoinhibitory domain region spans residues 521 to 558; it reads NEALYKLYSAAATHRHLYHQAFPAPKSESTEQSEKKKM.

This sequence belongs to the TRAFAC class dynamin-like GTPase superfamily. GB1/RHD3 GTPase family. GB1 subfamily. Monomeric and homodimeric. The homodimer, transiently formed by two molecules on opposing membranes, is the active form mediating ER membrane fusion. Interacts with REEP1, REEP5, RTN3 and RTN4 (via the transmembrane region); these proteins are involved in endoplasmic reticulum tubular network organization. Interacts with ZFYVE27; both proteins are involved in endoplasmic reticulum tubular network organization. Interacts with ARL6IP1; both proteins are involved in endoplasmic reticulum tubular network organization. Interacts with SPAST; the interaction is direct, could recruit SPAST to Golgi membranes. Interacts (via N-terminal region) with MAP4K4 (via CNH regulatory domain). May interact with TMED2. Interacts with CPT1C. In terms of processing, phosphorylated. Phosphorylation, by different kinases, of the N-terminal hypervariable region (HVR) regulates the ATL1-mediated membrane tethering step.

It is found in the endoplasmic reticulum membrane. It localises to the golgi apparatus membrane. Its subcellular location is the cell projection. The protein resides in the axon. It catalyses the reaction GTP + H2O = GDP + phosphate + H(+). Atlastin-1 (ATL1) is a membrane-anchored GTPase that mediates the GTP-dependent fusion of endoplasmic reticulum (ER) membranes, maintaining the continuous ER network. It facilitates the formation of three-way junctions where ER tubules intersect. Two atlastin-1 on neighboring ER tubules bind GTP and form loose homodimers through the GB1/RHD3-type G domains and 3HB regions. Upon GTP hydrolysis, the 3HB regions tighten, pulling the membranes together to drive their fusion. After fusion, the homodimer disassembles upon release of inorganic phosphate (Pi). Subsequently, GDP dissociates, resetting the monomers to a conformation ready for a new fusion cycle. May also regulate more or less directly Golgi biogenesis. Indirectly regulates axonal development. The chain is Atlastin-1 from Bos taurus (Bovine).